The following is a 52-amino-acid chain: ERMES regulator 1 (52 aa).

The Mitochondrial intermembrane segment spans residues 1–27 (MIFFFNQIRSIFTALHTPTQQIQLSRR). The chain crosses the membrane as a helical span at residues 28–46 (AFFQFLGYLGSCVVISLAA). Over 47-52 (QSKYVQ) the chain is Cytoplasmic.

It belongs to the EMR1 family.

It is found in the mitochondrion outer membrane. In terms of biological role, mediates the formation of endoplasmic reticulum (ER)-mitochondria encounter structure (ERMES) foci, thereby contributing to the formation of ER-mitochondrial contact sites. In Saccharomyces cerevisiae (strain ATCC 204508 / S288c) (Baker's yeast), this protein is ERMES regulator 1.